Consider the following 221-residue polypeptide: MKTITTDWELIPYSEAWSRQTEWFDALVHAKQNGESYENRIIFCEHPHVYTLGRSGKENNMLLGEEQLKTIGATLYHIDRGGDITYHGPGQLVCYPILNLEEFGLGLKEYVHLLEEAVIRVCASYGVVAGRLEKATGVWLEGDTSRARKICAIGVRSSHYVTMHGLALNVNTDLRYFSYIHPCGFIDKGVTSLQQELGRSIDMAEVKERLGRELLAALLSK.

The BPL/LPL catalytic domain maps to 35-221; it reads ESYENRIIFC…RELLAALLSK (187 aa). Substrate-binding positions include 80–87, 152–154, and 165–167; these read RGGDITYH, AIG, and GLA. Cys183 functions as the Acyl-thioester intermediate in the catalytic mechanism.

This sequence belongs to the LipB family.

The protein localises to the cytoplasm. The catalysed reaction is octanoyl-[ACP] + L-lysyl-[protein] = N(6)-octanoyl-L-lysyl-[protein] + holo-[ACP] + H(+). It participates in protein modification; protein lipoylation via endogenous pathway; protein N(6)-(lipoyl)lysine from octanoyl-[acyl-carrier-protein]: step 1/2. Its function is as follows. Catalyzes the transfer of endogenously produced octanoic acid from octanoyl-acyl-carrier-protein onto the lipoyl domains of lipoate-dependent enzymes. Lipoyl-ACP can also act as a substrate although octanoyl-ACP is likely to be the physiological substrate. In Bacteroides fragilis (strain YCH46), this protein is Octanoyltransferase.